The primary structure comprises 154 residues: Protein X (154 aa).

Residues 68–117 form a mitochondrial targeting sequence region; sequence PCALRFTSARYMETAMNTSHHLPRQLYKWTLGLFVMSTTGVEKYFKDCVF.

It belongs to the orthohepadnavirus protein X family. As to quaternary structure, may form homodimer. May interact with host CEBPA, CFLAR, CREB1, DDB1, E4F1, HBXIP, HSPD1/HSP60, NFKBIA, POLR2E and SMAD4. Interacts with host SMC5-SMC6 complex and induces its degradation. Interacts with host TRPC4AP; leading to prevent ubiquitination of TRPC4AP. Interacts with host PLSCR1; this interaction promotes ubiquitination and degradation of HBx and impairs HBx-mediated cell proliferation. A fraction may be phosphorylated in insect cells and HepG2 cells, a human hepatoblastoma cell line. Phosphorylated in vitro by host protein kinase C or mitogen-activated protein kinase. N-acetylated in insect cells.

It localises to the host cytoplasm. It is found in the host nucleus. Its subcellular location is the host mitochondrion. Functionally, multifunctional protein that plays a role in silencing host antiviral defenses and promoting viral transcription. Does not seem to be essential for HBV infection. May be directly involved in development of cirrhosis and liver cancer (hepatocellular carcinoma). Most of cytosolic activities involve modulation of cytosolic calcium. The effect on apoptosis is controversial depending on the cell types in which the studies have been conducted. May induce apoptosis by localizing in mitochondria and causing loss of mitochondrial membrane potential. May also modulate apoptosis by binding host CFLAR, a key regulator of the death-inducing signaling complex (DISC). Promotes viral transcription by using the host E3 ubiquitin ligase DDB1 to target the SMC5-SMC6 complex to proteasomal degradation. This host complex would otherwise bind to viral episomal DNA, and prevents its transcription. Moderately stimulates transcription of many different viral and cellular transcription elements. Promoters and enhancers stimulated by HBx contain DNA binding sites for NF-kappa-B, AP-1, AP-2, c-EBP, ATF/CREB, or the calcium-activated factor NF-AT. The polypeptide is Protein X (Hepatitis B virus genotype G (isolate IG29227/2000) (HBV-G)).